Consider the following 349-residue polypeptide: Phenylalanine--tRNA ligase alpha subunit (349 aa).

Glutamate 258 serves as a coordination point for Mg(2+).

The protein belongs to the class-II aminoacyl-tRNA synthetase family. Phe-tRNA synthetase alpha subunit type 1 subfamily. In terms of assembly, tetramer of two alpha and two beta subunits. Mg(2+) is required as a cofactor.

The protein resides in the cytoplasm. The enzyme catalyses tRNA(Phe) + L-phenylalanine + ATP = L-phenylalanyl-tRNA(Phe) + AMP + diphosphate + H(+). The chain is Phenylalanine--tRNA ligase alpha subunit from Rickettsia akari (strain Hartford).